A 473-amino-acid polypeptide reads, in one-letter code: Photosystem II CP43 reaction center protein (473 aa).

The propeptide occupies 1-14; it reads MKILYSLRRFYHVE. T15 carries the post-translational modification N-acetylthreonine. T15 is modified (phosphothreonine). Helical transmembrane passes span 69–93, 134–155, 178–200, 255–275, and 291–312; these read LFEVAHFVPEKPMYEQGLILLPHLA, LLGPETLEESFPFFGYVWKDRN, KALYFGGVYDTWAPGGGDVRKIT, KPFAWARRAFVWSGEAYLSYS, and WFNNTAYPSEFYGPTGPEASQA. E367 provides a ligand contact to [CaMn4O5] cluster. A helical membrane pass occupies residues 447–471; sequence RARAAAAGFEKGIDRDLEPVLYMNP.

Belongs to the PsbB/PsbC family. PsbC subfamily. As to quaternary structure, PSII is composed of 1 copy each of membrane proteins PsbA, PsbB, PsbC, PsbD, PsbE, PsbF, PsbH, PsbI, PsbJ, PsbK, PsbL, PsbM, PsbT, PsbX, PsbY, PsbZ, Psb30/Ycf12, at least 3 peripheral proteins of the oxygen-evolving complex and a large number of cofactors. It forms dimeric complexes. Requires Binds multiple chlorophylls and provides some of the ligands for the Ca-4Mn-5O cluster of the oxygen-evolving complex. It may also provide a ligand for a Cl- that is required for oxygen evolution. PSII binds additional chlorophylls, carotenoids and specific lipids. as cofactor.

It is found in the plastid. Its subcellular location is the chloroplast thylakoid membrane. Its function is as follows. One of the components of the core complex of photosystem II (PSII). It binds chlorophyll and helps catalyze the primary light-induced photochemical processes of PSII. PSII is a light-driven water:plastoquinone oxidoreductase, using light energy to abstract electrons from H(2)O, generating O(2) and a proton gradient subsequently used for ATP formation. This chain is Photosystem II CP43 reaction center protein, found in Hordeum vulgare (Barley).